An 872-amino-acid chain; its full sequence is Leucine--tRNA ligase (872 aa).

The 'HIGH' region signature appears at 56-66; the sequence is PYPSGNLHMGH. The 'KMSKS' region signature appears at 629 to 633; that stretch reads KMSKS. Lysine 632 provides a ligand contact to ATP.

It belongs to the class-I aminoacyl-tRNA synthetase family.

Its subcellular location is the cytoplasm. It catalyses the reaction tRNA(Leu) + L-leucine + ATP = L-leucyl-tRNA(Leu) + AMP + diphosphate. The chain is Leucine--tRNA ligase from Prochlorococcus marinus (strain MIT 9211).